Here is an 817-residue protein sequence, read N- to C-terminus: Anaphase-promoting complex subunit 4 (817 aa).

Tyr-469 bears the Phosphotyrosine mark. Phosphoserine is present on residues Ser-757 and Ser-758. A Glycyl lysine isopeptide (Lys-Gly) (interchain with G-Cter in SUMO2) cross-link involves residue Lys-772. 2 positions are modified to phosphoserine: Ser-777 and Ser-779. Lys-798 participates in a covalent cross-link: Glycyl lysine isopeptide (Lys-Gly) (interchain with G-Cter in SUMO2).

This sequence belongs to the APC4 family. In terms of assembly, the mammalian APC/C is composed at least of 14 distinct subunits ANAPC1, ANAPC2, CDC27/APC3, ANAPC4, ANAPC5, CDC16/APC6, ANAPC7, CDC23/APC8, ANAPC10, ANAPC11, CDC26/APC12, ANAPC13, ANAPC15 and ANAPC16 that assemble into a complex of at least 19 chains with a combined molecular mass of around 1.2 MDa; APC/C interacts with FZR1 and FBXO5. In the context of the APC/C complex, directly interacts with UBE2S.

The protein resides in the nucleus. Its pathway is protein modification; protein ubiquitination. Functionally, component of the anaphase promoting complex/cyclosome (APC/C), a cell cycle-regulated E3 ubiquitin ligase that controls progression through mitosis and the G1 phase of the cell cycle. The APC/C complex acts by mediating ubiquitination and subsequent degradation of target proteins: it mainly mediates the formation of 'Lys-11'-linked polyubiquitin chains and, to a lower extent, the formation of 'Lys-48'- and 'Lys-63'-linked polyubiquitin chains. The APC/C complex catalyzes assembly of branched 'Lys-11'-/'Lys-48'-linked branched ubiquitin chains on target proteins. This chain is Anaphase-promoting complex subunit 4 (ANAPC4), found in Pongo abelii (Sumatran orangutan).